A 256-amino-acid chain; its full sequence is ATP synthase peripheral stalk subunit b, mitochondrial (256 aa).

Residues 1–42 (MLSRVVLSAAAAAAPSLKNAALLGPGVLQATRIFHTGQPSLA) constitute a mitochondrion transit peptide. Lysine 131 carries the N6-succinyllysine modification. 6 positions are modified to N6-acetyllysine: lysine 139, lysine 154, lysine 162, lysine 221, lysine 233, and lysine 244.

Belongs to the eukaryotic ATPase B chain family. In terms of assembly, component of the ATP synthase complex composed at least of ATP5F1A/subunit alpha, ATP5F1B/subunit beta, ATP5MC1/subunit c (homooctomer), MT-ATP6/subunit a, MT-ATP8/subunit 8, ATP5ME/subunit e, ATP5MF/subunit f, ATP5MG/subunit g, ATP5MK/subunit k, ATP5MJ/subunit j, ATP5F1C/subunit gamma, ATP5F1D/subunit delta, ATP5F1E/subunit epsilon, ATP5PF/subunit F6, ATP5PB/subunit b, ATP5PD/subunit d, ATP5PO/subunit OSCP. ATP synthase complex consists of a soluble F(1) head domain (subunits alpha(3) and beta(3)) - the catalytic core - and a membrane F(0) domain - the membrane proton channel (subunits c, a, 8, e, f, g, k and j). These two domains are linked by a central stalk (subunits gamma, delta, and epsilon) rotating inside the F1 region and a stationary peripheral stalk (subunits F6, b, d, and OSCP).

The protein resides in the mitochondrion. It localises to the mitochondrion inner membrane. Its function is as follows. Subunit b, of the mitochondrial membrane ATP synthase complex (F(1)F(0) ATP synthase or Complex V) that produces ATP from ADP in the presence of a proton gradient across the membrane which is generated by electron transport complexes of the respiratory chain. ATP synthase complex consist of a soluble F(1) head domain - the catalytic core - and a membrane F(1) domain - the membrane proton channel. These two domains are linked by a central stalk rotating inside the F(1) region and a stationary peripheral stalk. During catalysis, ATP synthesis in the catalytic domain of F(1) is coupled via a rotary mechanism of the central stalk subunits to proton translocation. In vivo, can only synthesize ATP although its ATP hydrolase activity can be activated artificially in vitro. Part of the complex F(0) domain. Part of the complex F(0) domain and the peripheric stalk, which acts as a stator to hold the catalytic alpha(3)beta(3) subcomplex and subunit a/ATP6 static relative to the rotary elements. This is ATP synthase peripheral stalk subunit b, mitochondrial from Bos taurus (Bovine).